The following is a 165-amino-acid chain: 6,7-dimethyl-8-ribityllumazine synthase (165 aa).

5-amino-6-(D-ribitylamino)uracil is bound by residues Trp-26, 58-60, and 80-82; these read SIE and VVI. 85–86 contacts (2S)-2-hydroxy-3-oxobutyl phosphate; sequence GT. His-88 acts as the Proton donor in catalysis. Asn-113 is a 5-amino-6-(D-ribitylamino)uracil binding site. Arg-127 is a binding site for (2S)-2-hydroxy-3-oxobutyl phosphate.

Belongs to the DMRL synthase family.

It carries out the reaction (2S)-2-hydroxy-3-oxobutyl phosphate + 5-amino-6-(D-ribitylamino)uracil = 6,7-dimethyl-8-(1-D-ribityl)lumazine + phosphate + 2 H2O + H(+). The protein operates within cofactor biosynthesis; riboflavin biosynthesis; riboflavin from 2-hydroxy-3-oxobutyl phosphate and 5-amino-6-(D-ribitylamino)uracil: step 1/2. Functionally, catalyzes the formation of 6,7-dimethyl-8-ribityllumazine by condensation of 5-amino-6-(D-ribitylamino)uracil with 3,4-dihydroxy-2-butanone 4-phosphate. This is the penultimate step in the biosynthesis of riboflavin. The sequence is that of 6,7-dimethyl-8-ribityllumazine synthase from Saccharopolyspora erythraea (strain ATCC 11635 / DSM 40517 / JCM 4748 / NBRC 13426 / NCIMB 8594 / NRRL 2338).